Consider the following 111-residue polypeptide: Cytochrome c (111 aa).

N-acetylalanine is present on alanine 1. 3 residues coordinate heme c: cysteine 22, cysteine 25, and histidine 26. Lysine 80 is modified (N6,N6,N6-trimethyllysine). Methionine 88 contacts heme c. The residue at position 94 (lysine 94) is an N6,N6,N6-trimethyllysine.

This sequence belongs to the cytochrome c family. Binds 1 heme c group covalently per subunit.

The protein localises to the mitochondrion intermembrane space. Electron carrier protein. The oxidized form of the cytochrome c heme group can accept an electron from the heme group of the cytochrome c1 subunit of cytochrome reductase. Cytochrome c then transfers this electron to the cytochrome oxidase complex, the final protein carrier in the mitochondrial electron-transport chain. The chain is Cytochrome c from Brassica napus (Rape).